We begin with the raw amino-acid sequence, 592 residues long: Aspartate--tRNA ligase (592 aa).

Residue E176 participates in L-aspartate binding. An aspartate region spans residues 200–203; sequence QIFK. An L-aspartate-binding site is contributed by R222. Residues 222 to 224 and Q231 each bind ATP; that span reads RDE. Residue H450 coordinates L-aspartate. E484 lines the ATP pocket. R491 lines the L-aspartate pocket. 536 to 539 serves as a coordination point for ATP; sequence GLDR.

Belongs to the class-II aminoacyl-tRNA synthetase family. Type 1 subfamily. In terms of assembly, homodimer.

It is found in the cytoplasm. It carries out the reaction tRNA(Asp) + L-aspartate + ATP = L-aspartyl-tRNA(Asp) + AMP + diphosphate. Functionally, catalyzes the attachment of L-aspartate to tRNA(Asp) in a two-step reaction: L-aspartate is first activated by ATP to form Asp-AMP and then transferred to the acceptor end of tRNA(Asp). This Macrococcus caseolyticus (strain JCSC5402) (Macrococcoides caseolyticum) protein is Aspartate--tRNA ligase.